We begin with the raw amino-acid sequence, 391 residues long: Multidrug resistance protein MdtL (391 aa).

A run of 12 helical transmembrane segments spans residues 4–24, 42–62, 69–89, 93–113, 131–151, 158–178, 203–222, 245–265, 269–289, 293–313, 331–351, and 356–376; these read FLIC…MYLV, IAFS…GKVA, PVAI…SLAE, LFLA…VVAF, LLNG…HLIM, SLFW…LFIL, FFLS…LTFV, ALTA…LGIF, TLMI…AVSP, VSLF…GVAM, LGIA…VVGI, and MLIG…MFVA.

The protein belongs to the major facilitator superfamily. DHA1 family. MdtL (TC 2.A.1.2.22) subfamily.

Its subcellular location is the cell inner membrane. Its function is as follows. Confers resistance to chloramphenicol. The polypeptide is Multidrug resistance protein MdtL (Escherichia coli O127:H6 (strain E2348/69 / EPEC)).